Consider the following 133-residue polypeptide: MSRHKSKSIPGRNLRLADQIQKDLAGIIQREIDMTRAGLITLSGVELSADYAHAKVYFTVLGAEPDTAAALLNEKAGWLHSQLYKLLHIHTVPTLRFVHDPQITRGIEMSMLIDRANRPGPHSGVPDEPEDQS.

The protein belongs to the RbfA family. In terms of assembly, monomer. Binds 30S ribosomal subunits, but not 50S ribosomal subunits or 70S ribosomes.

The protein resides in the cytoplasm. Its function is as follows. One of several proteins that assist in the late maturation steps of the functional core of the 30S ribosomal subunit. Associates with free 30S ribosomal subunits (but not with 30S subunits that are part of 70S ribosomes or polysomes). Required for efficient processing of 16S rRNA. May interact with the 5'-terminal helix region of 16S rRNA. The chain is Ribosome-binding factor A from Bordetella bronchiseptica (strain ATCC BAA-588 / NCTC 13252 / RB50) (Alcaligenes bronchisepticus).